A 20-amino-acid chain; its full sequence is Unknown protein from 2D-PAGE of needles (20 aa).

The sequence is that of Unknown protein from 2D-PAGE of needles from Pinus pinaster (Maritime pine).